The sequence spans 109 residues: Small ribosomal subunit protein bS16 (109 aa).

The interval 87–109 (ALRETPKKSAPKAKAQERAKAAG) is disordered. Residues 100–109 (KAQERAKAAG) are compositionally biased toward basic and acidic residues.

It belongs to the bacterial ribosomal protein bS16 family.

The protein is Small ribosomal subunit protein bS16 of Rhodospirillum centenum (strain ATCC 51521 / SW).